The sequence spans 175 residues: Photosynthetic NDH subunit of subcomplex B 4, chloroplastic (175 aa).

A chloroplast-targeting transit peptide spans 1 to 24 (MAEAFTSFTFTNLHIPSSYNHSPK). The helical transmembrane segment at 95-111 (VYMFYIMFTCWGCLYFG) threads the bilayer.

In terms of assembly, part of the chloroplast NDH complex, composed of a mixture of chloroplast and nucleus encoded subunits. Component of the NDH subcomplex B, at least composed of PnsB1, PnsB2, PnsB3, PnsB4 and PnsB5.

The protein resides in the plastid. Its subcellular location is the chloroplast thylakoid membrane. NDH shuttles electrons from NAD(P)H:plastoquinone, via FMN and iron-sulfur (Fe-S) centers, to quinones in the photosynthetic chain and possibly in a chloroplast respiratory chain. The immediate electron acceptor for the enzyme in this species is believed to be plastoquinone. Couples the redox reaction to proton translocation, and thus conserves the redox energy in a proton gradient. The polypeptide is Photosynthetic NDH subunit of subcomplex B 4, chloroplastic (Arabidopsis thaliana (Mouse-ear cress)).